The following is a 697-amino-acid chain: Sialic acid-binding Ig-like lectin 10 (697 aa).

The signal sequence occupies residues Met-1–Ala-16. At Met-17–Asn-550 the chain is on the extracellular side. Residues Asp-18–Glu-121 enclose the Ig-like V-type domain. Disulfide bonds link Cys-36/Cys-173, Cys-41/Cys-101, Cys-164/Cys-215, and Cys-276/Cys-323. A glycan (N-linked (GlcNAc...) asparagine) is linked at Asn-100. N-acetylneuraminate is bound at residue Arg-119. 3 Ig-like C2-type domains span residues Pro-146–Arg-231, Pro-251–Ser-339, and Pro-344–Ser-441. Asn-355 and Asn-364 each carry an N-linked (GlcNAc...) asparagine glycan. A disulfide bond links Cys-380 and Cys-425. N-linked (GlcNAc...) asparagine glycans are attached at residues Asn-486 and Asn-504. The helical transmembrane segment at Gly-551 to Met-571 threads the bilayer. Residues Lys-572–Gln-697 lie on the Cytoplasmic side of the membrane. The ITIM motif 1 motif lies at Leu-595 to Val-600. The interval Pro-606–Gln-697 is disordered. The span at Pro-620–Pro-629 shows a compositional bias: pro residues. Polar residues predominate over residues Lys-650 to Gln-659. The ITIM motif 2 signature appears at Leu-665–Leu-670. A Phosphotyrosine modification is found at Tyr-667.

This sequence belongs to the immunoglobulin superfamily. SIGLEC (sialic acid binding Ig-like lectin) family. In terms of assembly, interacts with PTPN6/SHP-1 upon phosphorylation. Interacts with NCF1. Interacts with CD24; the probable CD24:SIGLEC10 complex is proposed to inhibit HGMB1-mediated tissue damage immune response. Interacts with HMGB1; the interaction is dependent on CD24. Interacts with RIGI, CBL and PTPN11. Phosphorylation of Tyr-667 is involved in binding to PTPN6. Expressed by peripheral blood leukocytes (eosinophils, monocytes and a natural killer cell subpopulation). Isoform 5 is found to be the most abundant isoform. Found in lymph node, lung, ovary and appendix. Isoform 1 is found at high levels and isoform 2 at lower levels in bone marrow, spleen and spinal cord. Isoform 2 is also found in brain. Isoform 4 is specifically found in natural killer cells.

Its subcellular location is the cell membrane. The protein localises to the secreted. Putative adhesion molecule that mediates sialic-acid dependent binding to cells. Preferentially binds to alpha-2,3- or alpha-2,6-linked sialic acid. The sialic acid recognition site may be masked by cis interactions with sialic acids on the same cell surface. In the immune response, seems to act as an inhibitory receptor upon ligand induced tyrosine phosphorylation by recruiting cytoplasmic phosphatase(s) via their SH2 domain(s) that block signal transduction through dephosphorylation of signaling molecules. Involved in negative regulation of B-cell antigen receptor signaling. The inhibition of B cell activation is dependent on PTPN6/SHP-1. In association with CD24 may be involved in the selective suppression of the immune response to danger-associated molecular patterns (DAMPs) such as HMGB1, HSP70 and HSP90. In association with CD24 may regulate the immune repsonse of natural killer (NK) cells. Plays a role in the control of autoimmunity. During initiation of adaptive immune responses by CD8-alpha(+) dendritic cells inhibits cross-presentation by impairing the formation of MHC class I-peptide complexes. The function seems to implicate recruitment of PTPN6/SHP-1, which dephosphorylates NCF1 of the NADPH oxidase complex consequently promoting phagosomal acidification. In Homo sapiens (Human), this protein is Sialic acid-binding Ig-like lectin 10 (SIGLEC10).